Consider the following 328-residue polypeptide: Tryptophan--tRNA ligase (328 aa).

ATP is bound by residues 8-10 and 16-17; these read RPT and GH. Positions 9 to 17 match the 'HIGH' region motif; sequence PTGKLHIGH. Asp-136 is an L-tryptophan binding site. ATP contacts are provided by residues 148–150, Leu-186, and 193–197; these read GED and KMSKS. Residues 193–197 carry the 'KMSKS' region motif; sequence KMSKS.

It belongs to the class-I aminoacyl-tRNA synthetase family. In terms of assembly, homodimer.

It localises to the cytoplasm. It carries out the reaction tRNA(Trp) + L-tryptophan + ATP = L-tryptophyl-tRNA(Trp) + AMP + diphosphate + H(+). In terms of biological role, catalyzes the attachment of tryptophan to tRNA(Trp). The protein is Tryptophan--tRNA ligase of Thermotoga maritima (strain ATCC 43589 / DSM 3109 / JCM 10099 / NBRC 100826 / MSB8).